We begin with the raw amino-acid sequence, 879 residues long: uncharacterized protein (879 aa).

A helical transmembrane segment spans residues 14 to 34; that stretch reads LAFFGCGVSVGAFFTLFLMGT.

Its subcellular location is the membrane. This is an uncharacterized protein from Mycoplasma pneumoniae (strain ATCC 29342 / M129 / Subtype 1) (Mycoplasmoides pneumoniae).